The sequence spans 287 residues: Lipoyl synthase (287 aa).

[4Fe-4S] cluster contacts are provided by cysteine 34, cysteine 39, cysteine 45, cysteine 60, cysteine 64, cysteine 67, and serine 273. Residues 46-262 (WNKRHATVMI…KYIAYSKGFL (217 aa)) form the Radical SAM core domain.

Belongs to the radical SAM superfamily. Lipoyl synthase family. The cofactor is [4Fe-4S] cluster.

Its subcellular location is the cytoplasm. It catalyses the reaction [[Fe-S] cluster scaffold protein carrying a second [4Fe-4S](2+) cluster] + N(6)-octanoyl-L-lysyl-[protein] + 2 oxidized [2Fe-2S]-[ferredoxin] + 2 S-adenosyl-L-methionine + 4 H(+) = [[Fe-S] cluster scaffold protein] + N(6)-[(R)-dihydrolipoyl]-L-lysyl-[protein] + 4 Fe(3+) + 2 hydrogen sulfide + 2 5'-deoxyadenosine + 2 L-methionine + 2 reduced [2Fe-2S]-[ferredoxin]. Its pathway is protein modification; protein lipoylation via endogenous pathway; protein N(6)-(lipoyl)lysine from octanoyl-[acyl-carrier-protein]: step 2/2. Its function is as follows. Catalyzes the radical-mediated insertion of two sulfur atoms into the C-6 and C-8 positions of the octanoyl moiety bound to the lipoyl domains of lipoate-dependent enzymes, thereby converting the octanoylated domains into lipoylated derivatives. The polypeptide is Lipoyl synthase (Wolbachia pipientis wMel).